The sequence spans 134 residues: Terepressin/terephysin (134 aa).

The first 33 residues, 1 to 33 (MKCSVLQMSRLSWTACVLLLPLLLLTLQGGVQG), serve as a signal peptide directing secretion. The cysteines at positions 34 and 39 are disulfide-linked. Positions 44–50 (KRAVDSV) are excised as a propeptide. 7 cysteine pairs are disulfide-bonded: C56–C100, C59–C73, C67–C90, C74–C80, C107–C121, C115–C133, and C122–C127.

Belongs to the vasopressin/oxytocin family. Post-translationally, contains 7 disulfide bonds. As to expression, expressed by the venom duct.

Its subcellular location is the secreted. This Terebra anilis (Auger snail) protein is Terepressin/terephysin.